The chain runs to 195 residues: 4'-phosphopantetheinyl transferase AcpT (195 aa).

It belongs to the P-Pant transferase superfamily. Gsp/Sfp/HetI/AcpT family.

The catalysed reaction is apo-[ACP] + CoA = holo-[ACP] + adenosine 3',5'-bisphosphate + H(+). Functionally, may be involved in an alternative pathway for phosphopantetheinyl transfer and holo-ACP synthesis in E.coli. The native apo-protein substrate is unknown. Is able to functionally replace AcpS in vivo but only when expressed at high levels. The chain is 4'-phosphopantetheinyl transferase AcpT (acpT) from Escherichia coli O157:H7.